The sequence spans 523 residues: 11-oxo-beta-amyrin 30-oxidase (523 aa).

The chain crosses the membrane as a helical span at residues 9-29 (AIWVVLTVILAAIPIWVCHMV). C471 contacts heme.

Belongs to the cytochrome P450 family. Requires heme as cofactor. As to expression, expressed in roots, stolons and stems. Not detected in leaves.

Its subcellular location is the membrane. The enzyme catalyses 11-oxo-beta-amyrin + 3 reduced [NADPH--hemoprotein reductase] + 3 O2 = glycyrrhetinate + 3 oxidized [NADPH--hemoprotein reductase] + 4 H2O + 4 H(+). It carries out the reaction 11-oxo-beta-amyrin + reduced [NADPH--hemoprotein reductase] + O2 = 30-hydroxy-11-oxo-beta-amyrin + oxidized [NADPH--hemoprotein reductase] + H2O + H(+). It catalyses the reaction 30-hydroxy-11-oxo-beta-amyrin + reduced [NADPH--hemoprotein reductase] + O2 = glycyrrhetaldehyde + oxidized [NADPH--hemoprotein reductase] + 2 H2O + H(+). The catalysed reaction is glycyrrhetaldehyde + reduced [NADPH--hemoprotein reductase] + O2 = glycyrrhetinate + oxidized [NADPH--hemoprotein reductase] + H2O + 2 H(+). Involved in the biosynthesis of Glycyrrhetinic acid (GA), a natural product which exhibits anti-inflammatory activity. Involved in the biosynthesis of the triterpenoid saponin glycyrrhizin. Catalyzes three sequential oxidation steps at C-30 of 11-oxo-beta-amyrin. Also able to catalyze C-30 monohydroxylation of beta-amyrin to produce 30-hydroxy-beta-amyrin. May be also responsible for the oxidation at positions C-22 and C-29 in addition to C-30. This is 11-oxo-beta-amyrin 30-oxidase from Glycyrrhiza uralensis (Chinese licorice).